The sequence spans 347 residues: N-acetyl-gamma-glutamyl-phosphate reductase (347 aa).

The active site involves cysteine 152.

Belongs to the NAGSA dehydrogenase family. Type 1 subfamily.

It is found in the cytoplasm. The enzyme catalyses N-acetyl-L-glutamate 5-semialdehyde + phosphate + NADP(+) = N-acetyl-L-glutamyl 5-phosphate + NADPH + H(+). It participates in amino-acid biosynthesis; L-arginine biosynthesis; N(2)-acetyl-L-ornithine from L-glutamate: step 3/4. Catalyzes the NADPH-dependent reduction of N-acetyl-5-glutamyl phosphate to yield N-acetyl-L-glutamate 5-semialdehyde. This chain is N-acetyl-gamma-glutamyl-phosphate reductase, found in Neisseria gonorrhoeae (strain ATCC 700825 / FA 1090).